The chain runs to 155 residues: Small ribosomal subunit protein mS86 (155 aa).

The N-terminal 27 residues, 1–27 (MHYMGLFSRAGNIFRQPRALQASNAML), are a transit peptide targeting the mitochondrion. The RRM domain maps to 36-114 (SKIFVGGLSP…RIIGVHPADS (79 aa)).

Belongs to the GR-RBP family. Component of the mitochondrial ribosome small subunit.

The protein localises to the mitochondrion. Functionally, possibly has a role in RNA transcription or processing during stress. This Arabidopsis thaliana (Mouse-ear cress) protein is Small ribosomal subunit protein mS86 (RBG6).